A 442-amino-acid chain; its full sequence is Chromosomal replication initiator protein DnaA (442 aa).

Residues 1 to 69 (METLWDGILS…AQAGEQVIGR (69 aa)) are domain I, interacts with DnaA modulators. Positions 69–103 (RPIQVDFIVSEQSEEALKPVIEREPAPAAPPANVA) are domain II. The tract at residues 104 to 320 (SLNSKYTFSR…GALIRAVAYV (217 aa)) is domain III, AAA+ region. Residues Gly-148, Gly-150, Lys-151, and Thr-152 each contribute to the ATP site. The domain IV, binds dsDNA stretch occupies residues 321-442 (SISGLPMTVE…GNRLEADARH (122 aa)).

It belongs to the DnaA family. As to quaternary structure, oligomerizes as a right-handed, spiral filament on DNA at oriC.

The protein localises to the cytoplasm. In terms of biological role, plays an essential role in the initiation and regulation of chromosomal replication. ATP-DnaA binds to the origin of replication (oriC) to initiate formation of the DNA replication initiation complex once per cell cycle. Binds the DnaA box (a 9 base pair repeat at the origin) and separates the double-stranded (ds)DNA. Forms a right-handed helical filament on oriC DNA; dsDNA binds to the exterior of the filament while single-stranded (ss)DNA is stabiized in the filament's interior. The ATP-DnaA-oriC complex binds and stabilizes one strand of the AT-rich DNA unwinding element (DUE), permitting loading of DNA polymerase. After initiation quickly degrades to an ADP-DnaA complex that is not apt for DNA replication. Binds acidic phospholipids. The protein is Chromosomal replication initiator protein DnaA of Gloeobacter violaceus (strain ATCC 29082 / PCC 7421).